Consider the following 896-residue polypeptide: Desmocollin-3 (896 aa).

A signal peptide spans 1–31; it reads MVVPEFRSPQCRALCTKLLLTLWVFSFVGEA. Positions 32 to 135 are excised as a propeptide; the sequence is CKKVTFHVPS…KETVLRRSKR (104 aa). Cadherin domains lie at 136-243, 244-355, 356-472, 473-580, and 581-691; these read RWAP…YPLF, TEAI…APTF, RQNT…GPEC, KPPE…EIIQ, and DYIV…TLGK. Over 136 to 695 the chain is Extracellular; the sequence is RWAPIPCSMQ…GITLGKWAIL (560 aa). N-linked (GlcNAc...) asparagine glycosylation is present at N166. Residues N392 and N547 are each glycosylated (N-linked (GlcNAc...) asparagine). The N-linked (GlcNAc...) (high mannose) asparagine glycan is linked to N630. Residues 696–716 form a helical membrane-spanning segment; that stretch reads AILLGIALLFSVLLTLVCGVV. The Cytoplasmic portion of the chain corresponds to 717–896; that stretch reads TARKGKHFPE…LTLAETCTKR (180 aa).

In terms of assembly, may form homodimers. Interacts with DSG1; there is evidence to suggest that the interaction promotes cell-cell adhesion of keratinocytes. Expressed in the basal layers of epidermal stratified epithelia from birth (at protein level).

The protein localises to the cell membrane. Its subcellular location is the cell junction. The protein resides in the desmosome. It is found in the cytoplasm. A component of desmosome cell-cell junctions which are required for positive regulation of cellular adhesion. Required for cell-cell adhesion in the epidermis, as a result required for the maintenance of the dermal cohesion and the dermal barrier function. Required for cell-cell adhesion of epithelial cell layers surrounding the telogen hair club, as a result plays an important role in telogen hair shaft anchorage. Essential for successful completion of embryo compaction and development beyond the 8-cell stage. The sequence is that of Desmocollin-3 (Dsc3) from Mus musculus (Mouse).